The following is a 353-amino-acid chain: A-kinase anchor protein 7 isoforms delta and gamma (353 aa).

Basic and acidic residues-rich tracts occupy residues 1–22 and 66–76; these read MERPAAGEIDANKCDHLSRGEE and RSKENRGDRND. Disordered stretches follow at residues 1–33 and 47–85; these read MERPAAGEIDANKCDHLSRGEEGTGDLETSPVG and DDCGLPDVPQGNVPQGNPKRSKENRGDRNDHVKKRKKAK. AMP-binding positions include Thr134 and 224-226; that span reads HLT. Residues Thr134 and 224 to 226 contribute to the CMP site; that span reads HLT. Positions 299 to 353 are PKA-RII-alpha subunit binding domain; that stretch reads AELVRLSKRLVENAVLKAVQQYLEETQNKKQPGEGNSVKAEEGDRNGDGSDNNRK. Positions 300-324 are RI-alpha-binding; the sequence is ELVRLSKRLVENAVLKAVQQYLEET. The interval 301–314 is RII-binding; the sequence is LVRLSKRLVENAVL. Residues 321-353 form a disordered region; sequence LEETQNKKQPGEGNSVKAEEGDRNGDGSDNNRK. A compositionally biased stretch (basic and acidic residues) spans 337 to 353; sequence KAEEGDRNGDGSDNNRK.

As to quaternary structure, binds cAMP-dependent protein kinase (PKA). Interacts with PRKCA; only the cytoplasmic form is capable of interacting with PRKCA. In terms of tissue distribution, expressed highly in the heart, and moderately in brain, lung, liver, kidney and testis. Hardly detectable in spleen and skeletal muscle. In kidney, isoform Delta is expressed in the principal cells of the IMCD.

Its subcellular location is the nucleus. The protein resides in the cytoplasm. It is found in the cell membrane. Probably targets cAMP-dependent protein kinase (PKA) to the cellular membrane or cytoskeletal structures. The membrane-associated form reduces epithelial sodium channel (ENaC) activity, whereas the free cytoplasmic form may negatively regulate ENaC channel feedback inhibition by intracellular sodium. Isoform Delta may be involved in shuttling aquaporin-2 (AQP2) to the plasma membrane. The protein is A-kinase anchor protein 7 isoforms delta and gamma of Rattus norvegicus (Rat).